Here is a 723-residue protein sequence, read N- to C-terminus: LPS-assembly protein LptD (723 aa).

A signal peptide spans 1–23 (MNTLKLCLILYACLVLLPVRVMS).

This sequence belongs to the LptD family. As to quaternary structure, component of the lipopolysaccharide transport and assembly complex. Interacts with LptE and LptA.

It localises to the cell outer membrane. Its function is as follows. Together with LptE, is involved in the assembly of lipopolysaccharide (LPS) at the surface of the outer membrane. This is LPS-assembly protein LptD from Nitrosomonas europaea (strain ATCC 19718 / CIP 103999 / KCTC 2705 / NBRC 14298).